The primary structure comprises 101 residues: Small ribosomal subunit protein uS14 (101 aa).

Belongs to the universal ribosomal protein uS14 family. As to quaternary structure, part of the 30S ribosomal subunit. Contacts proteins S3 and S10.

In terms of biological role, binds 16S rRNA, required for the assembly of 30S particles and may also be responsible for determining the conformation of the 16S rRNA at the A site. This is Small ribosomal subunit protein uS14 from Proteus mirabilis (strain HI4320).